The sequence spans 444 residues: N-succinylarginine dihydrolase (444 aa).

Substrate contacts are provided by residues 19–28 (SGLSVGNIAS), asparagine 110, and 137–138 (HR). Glutamate 174 is an active-site residue. Arginine 214 lines the substrate pocket. Histidine 250 is an active-site residue. Substrate is bound by residues aspartate 252 and asparagine 362. Cysteine 368 acts as the Nucleophile in catalysis.

This sequence belongs to the succinylarginine dihydrolase family. Homodimer.

It carries out the reaction N(2)-succinyl-L-arginine + 2 H2O + 2 H(+) = N(2)-succinyl-L-ornithine + 2 NH4(+) + CO2. Its pathway is amino-acid degradation; L-arginine degradation via AST pathway; L-glutamate and succinate from L-arginine: step 2/5. Its function is as follows. Catalyzes the hydrolysis of N(2)-succinylarginine into N(2)-succinylornithine, ammonia and CO(2). The sequence is that of N-succinylarginine dihydrolase from Aliivibrio fischeri (strain MJ11) (Vibrio fischeri).